We begin with the raw amino-acid sequence, 74 residues long: Protein SlyX homolog (74 aa).

Belongs to the SlyX family.

This is Protein SlyX homolog from Neisseria meningitidis serogroup C / serotype 2a (strain ATCC 700532 / DSM 15464 / FAM18).